The chain runs to 397 residues: Elongation factor Tu (397 aa).

The tr-type G domain maps to 10 to 206 (KPHVNIGTIG…AVDTYIPTPE (197 aa)). The segment at 19-26 (GHVDHGKT) is G1. 19-26 (GHVDHGKT) is a binding site for GTP. Threonine 26 is a Mg(2+) binding site. The tract at residues 60 to 64 (GITIN) is G2. Residues 81–84 (DCPG) form a G3 region. Residues 81 to 85 (DCPGH) and 136 to 139 (NKSD) contribute to the GTP site. Residues 136–139 (NKSD) are G4. The G5 stretch occupies residues 174-176 (SAL).

This sequence belongs to the TRAFAC class translation factor GTPase superfamily. Classic translation factor GTPase family. EF-Tu/EF-1A subfamily. As to quaternary structure, monomer.

The protein localises to the cytoplasm. The catalysed reaction is GTP + H2O = GDP + phosphate + H(+). Functionally, GTP hydrolase that promotes the GTP-dependent binding of aminoacyl-tRNA to the A-site of ribosomes during protein biosynthesis. The sequence is that of Elongation factor Tu from Clostridium kluyveri (strain ATCC 8527 / DSM 555 / NBRC 12016 / NCIMB 10680 / K1).